Reading from the N-terminus, the 231-residue chain is MKIGIIGAMEQEVAILKDKIEGLSTITKAGCTFYTGTLNGADVVLLQSGIGKVAAAVGTTLLIAEHNVDVVLNTGSAGGFDSSLNLGDVVISTEVRHHDADVTAFGYEMGQMAQQPAAFIADEKLITTAEQALTEMSDKHAVRGLICTGDVFVCTPERQEFIRTHFPSVIAVEMEASAIAQTCHQFNTPFVVVRAISDVADKESPMSFDEFLPLAAQSSSEMVLNMVTLLK.

Glutamate 12 (proton acceptor) is an active-site residue. Residues glycine 78, valine 153, and 174–175 (ME) contribute to the substrate site. The Proton donor role is filled by aspartate 198.

The protein belongs to the PNP/UDP phosphorylase family. MtnN subfamily.

It catalyses the reaction S-adenosyl-L-homocysteine + H2O = S-(5-deoxy-D-ribos-5-yl)-L-homocysteine + adenine. The catalysed reaction is S-methyl-5'-thioadenosine + H2O = 5-(methylsulfanyl)-D-ribose + adenine. It carries out the reaction 5'-deoxyadenosine + H2O = 5-deoxy-D-ribose + adenine. It functions in the pathway amino-acid biosynthesis; L-methionine biosynthesis via salvage pathway; S-methyl-5-thio-alpha-D-ribose 1-phosphate from S-methyl-5'-thioadenosine (hydrolase route): step 1/2. Its function is as follows. Catalyzes the irreversible cleavage of the glycosidic bond in both 5'-methylthioadenosine (MTA) and S-adenosylhomocysteine (SAH/AdoHcy) to adenine and the corresponding thioribose, 5'-methylthioribose and S-ribosylhomocysteine, respectively. Also cleaves 5'-deoxyadenosine, a toxic by-product of radical S-adenosylmethionine (SAM) enzymes, into 5-deoxyribose and adenine. The protein is 5'-methylthioadenosine/S-adenosylhomocysteine nucleosidase of Aliivibrio fischeri (Vibrio fischeri).